The following is a 315-amino-acid chain: Polyprenyl transferase mpaA (315 aa).

8 helical membrane-spanning segments follow: residues 40–60 (IEFI…LCGA), 84–103 (LASG…GQYF), 118–135 (IWSL…YPYL), 143–163 (VFVY…ITGW), 174–194 (GDII…CVYF), 224–244 (LFLA…ISTI), 248–268 (WLWV…IAQF), and 279–299 (IHWD…VEVG).

Belongs to the UbiA prenyltransferase family. Requires Mg(2+) as cofactor.

It localises to the golgi apparatus membrane. It carries out the reaction 5,7-dihydroxy-4-methylphthalide + (2E,6E)-farnesyl diphosphate = 4-farnesyl-3,5-dihydroxy-6-methylphthalide + diphosphate. It functions in the pathway secondary metabolite biosynthesis; terpenoid biosynthesis. Polyprenyl transferase; part of the gene cluster that mediates the biosynthesis of mycophenolic acid (MPA), the first isolated antibiotic natural product in the world obtained from a culture of Penicillium brevicompactum in 1893. MpaA is a Golgi apparatus-associated enzyme that catalyzes the prenylation of 5,7-dihydroxy-4,6-dimethylphthalide (DHMP) to yield farnesyl-DHMP (FDHMP). The first step of the pathway is the synthesis of 5-methylorsellinic acid (5MOA) by the cytosolic polyketide synthase mpaC. 5MOA is then converted to the phthalide compound 5,7-dihydroxy-4,6-dimethylphthalide (DHMP) by the endoplasmic reticulum-bound cytochrome P450 monooxygenase mpaDE. MpaDE first catalyzes hydroxylation of 5-MOA to 4,6-dihydroxy-2-(hydroxymethyl)-3-methylbenzoic acid (DHMB). MpaDE then acts as a lactone synthase that catalyzes the ring closure to convert DHMB into DHMP. The next step is the prenylation of DHMP by the Golgi apparatus-associated prenyltransferase mpaA to yield farnesyl-DHMP (FDHMP). The ER-bound oxygenase mpaB then mediates the oxidative cleavage the C19-C20 double bond in FDHMP to yield FDHMP-3C via a mycophenolic aldehyde intermediate. The O-methyltransferase mpaG catalyzes the methylation of FDHMP-3C to yield MFDHMP-3C. After the cytosolic methylation of FDHMP-3C, MFDHMP-3C enters into peroxisomes probably via free diffusion due to its low molecular weight. Upon a peroxisomal CoA ligation reaction, catalyzed by a beta-oxidation component enzyme acyl-CoA ligase ACL891, MFDHMP-3C-CoA would then be restricted to peroxisomes for the following beta-oxidation pathway steps. The peroxisomal beta-oxidation machinery than converts MFDHMP-3C-CoA into MPA_CoA, via a beta-oxidation chain-shortening process. Finally mpaH acts as a peroxisomal acyl-CoA hydrolase with high substrate specificity toward MPA-CoA to release the final product MPA. This Penicillium brevicompactum protein is Polyprenyl transferase mpaA.